Here is a 234-residue protein sequence, read N- to C-terminus: Small ribosomal subunit protein uS3 (234 aa).

Residues 39–107 enclose the KH type-2 domain; it reads IRKFLKKELY…EVSINIKEVK (69 aa).

It belongs to the universal ribosomal protein uS3 family. In terms of assembly, part of the 30S ribosomal subunit. Forms a tight complex with proteins S10 and S14.

In terms of biological role, binds the lower part of the 30S subunit head. Binds mRNA in the 70S ribosome, positioning it for translation. This chain is Small ribosomal subunit protein uS3, found in Helicobacter pylori (strain J99 / ATCC 700824) (Campylobacter pylori J99).